The chain runs to 172 residues: Transcriptional activator protein (172 aa).

Positions 56 to 71 match the Nuclear localization signal motif; the sequence is KAQHRIAKHKAIRRRR. The segment at 76–93 is a zinc-finger region; the sequence is CGCSIFYHIKCADHGFTH. Residues 119 to 172 are disordered; sequence DHAGGRSSIHTDKDIPHPSQVQSQPQESTGSPQSIPELPSLDDIDSSFWDDIFK. A compositionally biased stretch (polar residues) spans 137-152; that stretch reads SQVQSQPQESTGSPQS. The segment at 158-172 is transactivation; the sequence is SLDDIDSSFWDDIFK.

It belongs to the geminiviridae transcriptional activator protein family. In terms of assembly, monomer. Homodimer. Homooligomer. Self-interaction correlates with nuclear localization and efficient activation of transcription. Monomers suppress local silencing by interacting with and inactivating host adenosine kinase 2 (ADK2) in the cytoplasm. Interacts with and inhibits host SNF1 kinase. Binds to ssDNA. Post-translationally, phosphorylated.

Its subcellular location is the host nucleus. The protein resides in the host cytoplasm. Strong activator of the late viral genes promoters. Enhances the expression of the capsid protein and nuclear shuttle protein. Acts as a suppressor of RNA-mediated gene silencing, also known as post-transcriptional gene silencing (PTGS), a mechanism of plant viral defense that limits the accumulation of viral RNAs. Suppresses the host RNA silencing by inhibiting adenosine kinase 2 (ADK2), a kinase involved in a general methylation pathway. Also suppresses the host basal defense by interacting with and inhibiting SNF1 kinase, a key regulator of cell metabolism implicated in innate antiviral defense. Determines pathogenicity. This Bean golden yellow mosaic virus (isolate Puerto Rico-Japan) (BGYMV) protein is Transcriptional activator protein.